Here is a 1040-residue protein sequence, read N- to C-terminus: Multidrug resistance protein MdtB (1040 aa).

12 consecutive transmembrane segments (helical) span residues 16-36 (FIMRPVATTLLMVAILLAGII), 347-367 (LMMAIALVVMIIYLFLRNIPA), 369-389 (IIPGVAVPLSLIGTFAVMVFL), 396-416 (LTLMALTIATGFVVDDAIVVI), 440-460 (IGFTIISLTFSLIAVLIPLLF), 472-492 (FAITLAVAILISAVVSLTLTP), 537-557 (WLTLSVALSTLLLSVLLWVFI), 863-883 (LGSTVWLIVAAVVAMYIVLGI), 888-908 (FIHPITILSTLPTAGVGALLA), 911-931 (IAGSELDVIAIIGIILLIGIV), 968-988 (ILMTTLAALLGALPLMLSTGV), and 998-1018 (IGMVGGLIVSQVLTLFTTPVI).

Belongs to the resistance-nodulation-cell division (RND) (TC 2.A.6) family. MdtB subfamily. Part of a tripartite efflux system composed of MdtA, MdtB and MdtC. MdtB forms a heteromultimer with MdtC.

The protein localises to the cell inner membrane. In terms of biological role, the MdtABC tripartite complex confers resistance against novobiocin and deoxycholate. This chain is Multidrug resistance protein MdtB, found in Escherichia coli O45:K1 (strain S88 / ExPEC).